We begin with the raw amino-acid sequence, 329 residues long: Malate dehydrogenase (329 aa).

Position 12 to 18 (12 to 18 (GAAGQIC)) interacts with NAD(+). Residues R95 and R101 each coordinate substrate. NAD(+) contacts are provided by residues N108, Q115, and 132–134 (VGN). Residues N134 and R165 each contribute to the substrate site. H190 serves as the catalytic Proton acceptor.

Belongs to the LDH/MDH superfamily. MDH type 2 family. In terms of assembly, homodimer.

The catalysed reaction is (S)-malate + NAD(+) = oxaloacetate + NADH + H(+). In terms of biological role, catalyzes the reversible oxidation of malate to oxaloacetate. The protein is Malate dehydrogenase of Aquaspirillum arcticum.